A 231-amino-acid chain; its full sequence is Large ribosomal subunit protein uL1 (231 aa).

The protein belongs to the universal ribosomal protein uL1 family. Part of the 50S ribosomal subunit.

Its function is as follows. Binds directly to 23S rRNA. The L1 stalk is quite mobile in the ribosome, and is involved in E site tRNA release. Functionally, protein L1 is also a translational repressor protein, it controls the translation of the L11 operon by binding to its mRNA. This is Large ribosomal subunit protein uL1 from Mycoplasmopsis agalactiae (strain NCTC 10123 / CIP 59.7 / PG2) (Mycoplasma agalactiae).